We begin with the raw amino-acid sequence, 510 residues long: NAD(P)H-quinone oxidoreductase subunit 2 B, chloroplastic (510 aa).

13 consecutive transmembrane segments (helical) span residues 24–44, 57–77, 99–119, 124–144, 149–169, 183–203, 227–247, 295–315, 323–343, 354–374, 395–415, 418–438, and 484–504; these read LLFF…GLIL, IPWL…ALLF, IFQF…VEYI, MAIT…MFLC, LITI…LSGY, YLLM…WLYG, PGIS…LSPA, WHLL…LIAI, MLAY…IVGD, YMLF…LFGL, ALSL…AGFF, LYLF…IGLL, and MIVC…IIAI.

Belongs to the complex I subunit 2 family. In terms of assembly, NDH is composed of at least 16 different subunits, 5 of which are encoded in the nucleus.

It is found in the plastid. Its subcellular location is the chloroplast thylakoid membrane. It catalyses the reaction a plastoquinone + NADH + (n+1) H(+)(in) = a plastoquinol + NAD(+) + n H(+)(out). It carries out the reaction a plastoquinone + NADPH + (n+1) H(+)(in) = a plastoquinol + NADP(+) + n H(+)(out). Its function is as follows. NDH shuttles electrons from NAD(P)H:plastoquinone, via FMN and iron-sulfur (Fe-S) centers, to quinones in the photosynthetic chain and possibly in a chloroplast respiratory chain. The immediate electron acceptor for the enzyme in this species is believed to be plastoquinone. Couples the redox reaction to proton translocation, and thus conserves the redox energy in a proton gradient. The polypeptide is NAD(P)H-quinone oxidoreductase subunit 2 B, chloroplastic (Guizotia abyssinica (Niger)).